The sequence spans 226 residues: ATP synthase subunit a (226 aa).

5 helical membrane-spanning segments follow: residues 18 to 38 (LSLN…TYWL), 74 to 94 (FVSL…PYIF), 100 to 120 (LTLT…YGWI), 162 to 182 (LTAN…TGPM), and 187 to 207 (IILS…SAVA).

This sequence belongs to the ATPase A chain family. As to quaternary structure, F-type ATPases have 2 components, CF(1) - the catalytic core - and CF(0) - the membrane proton channel. CF(1) has five subunits: alpha(3), beta(3), gamma(1), delta(1), epsilon(1). CF(0) has three main subunits: a, b and c.

The protein resides in the mitochondrion inner membrane. In terms of biological role, mitochondrial membrane ATP synthase (F(1)F(0) ATP synthase or Complex V) produces ATP from ADP in the presence of a proton gradient across the membrane which is generated by electron transport complexes of the respiratory chain. F-type ATPases consist of two structural domains, F(1) - containing the extramembraneous catalytic core and F(0) - containing the membrane proton channel, linked together by a central stalk and a peripheral stalk. During catalysis, ATP synthesis in the catalytic domain of F(1) is coupled via a rotary mechanism of the central stalk subunits to proton translocation. Key component of the proton channel; it may play a direct role in the translocation of protons across the membrane. The chain is ATP synthase subunit a from Aedes aegypti (Yellowfever mosquito).